Consider the following 566-residue polypeptide: NAD-dependent malic enzyme 3 (566 aa).

Catalysis depends on Tyr105, which acts as the Proton donor. Residue Lys178 is the Proton acceptor of the active site. Positions 249, 250, and 273 each coordinate a divalent metal cation. Residues 306–309 (AGTA), Asn423, and Asn468 contribute to the NAD(+) site.

This sequence belongs to the malic enzymes family. The cofactor is Mg(2+). Requires Mn(2+) as cofactor.

It carries out the reaction (S)-malate + NAD(+) = pyruvate + CO2 + NADH. It catalyses the reaction oxaloacetate + H(+) = pyruvate + CO2. In terms of biological role, catalyzes the decarboxylation of malate to pyruvate. Can use NAD and NADP, but with a strong preference for NAD. Can also catalyze the decarboxylation of oxaloacetate. Involved in keeping the ATP levels high. The sequence is that of NAD-dependent malic enzyme 3 (malS) from Bacillus subtilis (strain 168).